Reading from the N-terminus, the 153-residue chain is Ribonuclease H (153 aa).

Positions 1–142 (MRKKIEIFTD…CDELARIAAE (142 aa)) constitute an RNase H type-1 domain. Positions 10, 48, 70, and 134 each coordinate Mg(2+).

The protein belongs to the RNase H family. Monomer. Mg(2+) serves as cofactor.

It localises to the cytoplasm. It catalyses the reaction Endonucleolytic cleavage to 5'-phosphomonoester.. Endonuclease that specifically degrades the RNA of RNA-DNA hybrids. In Baumannia cicadellinicola subsp. Homalodisca coagulata, this protein is Ribonuclease H.